The primary structure comprises 122 residues: Serum amyloid A-2 protein (122 aa).

Residues 1–19 form the signal peptide; the sequence is MKLLTSLVFCSLLLGVCHG. The segment covering 89-108 has biased composition (basic and acidic residues); sequence RGHEDTMADQEANRHGRSGK. The tract at residues 89-122 is disordered; that stretch reads RGHEDTMADQEANRHGRSGKDPNYYRPPGLPAKY.

It belongs to the SAA family. As to quaternary structure, apolipoprotein of the HDL complex. As to expression, expressed by the liver; secreted in plasma.

Its subcellular location is the secreted. Major acute phase reactant. This chain is Serum amyloid A-2 protein, found in Mus musculus (Mouse).